We begin with the raw amino-acid sequence, 379 residues long: Galactose-1-phosphate uridylyltransferase (379 aa).

A compositionally biased stretch (basic and acidic residues) spans 1-10; it reads MSHSGADPEQ. Residues 1-20 form a disordered region; that stretch reads MSHSGADPEQRQQASEADAM. Residue Cys75 coordinates Zn(2+). Residues Ala81, 97-98, and Asn173 each bind UDP-alpha-D-glucose; that span reads ND. His184 serves as a coordination point for Zn(2+). Residue His186 is the Tele-UMP-histidine intermediate of the active site. Gln188 is a UDP-alpha-D-glucose binding site. Zn(2+) is bound by residues Glu202, His301, His319, and His321. Residues 334-337 and 339-340 each bind UDP-alpha-D-glucose; these read KFMV and YE.

The protein belongs to the galactose-1-phosphate uridylyltransferase type 1 family. Homodimer. Zn(2+) is required as a cofactor.

It catalyses the reaction alpha-D-galactose 1-phosphate + UDP-alpha-D-glucose = alpha-D-glucose 1-phosphate + UDP-alpha-D-galactose. It functions in the pathway carbohydrate metabolism; galactose metabolism. Its function is as follows. Plays an important role in galactose metabolism. This is Galactose-1-phosphate uridylyltransferase (Galt) from Mus musculus (Mouse).